The primary structure comprises 338 residues: Secretory carrier-associated membrane protein 1 (338 aa).

The interval 1 to 64 (MSDFDSNPFA…NVPNTQPAIM (64 aa)) is disordered. The residue at position 2 (Ser2) is an N-acetylserine. At Ser2 the chain carries Phosphoserine. Over 2 to 155 (SDFDSNPFAD…QKTVKLMYYL (154 aa)) the chain is Cytoplasmic. The residue at position 45 (Thr45) is a Phosphothreonine. Residues 156–176 (WMFHAVTLFLNIFGCLAWFCV) traverse the membrane as a helical segment. Over 177 to 181 (DSARA) the chain is Lumenal. Residues 182 to 202 (VDFGLSILWFLLFTPCSFVCW) traverse the membrane as a helical segment. Topologically, residues 203–218 (YRPLYGAFRSDSSFRF) are cytoplasmic. A helical membrane pass occupies residues 219 to 239 (FVFFFVYICQFAVHVLQAAGF). Residues 240 to 261 (HNWGNCGWISSLTGLNQNIPVG) are Lumenal-facing. Residues 262 to 282 (IMMIIIAALFTASAVISLVMF) traverse the membrane as a helical segment. Over 283-338 (KKVHGLYRTTGASFEKAQQEFATGVMSNKTVQTAAANAASTAASSAAQNAFKGNQI) the chain is Cytoplasmic.

The protein belongs to the SCAMP family. In terms of assembly, interacts with SYNRG and ITSN1. Interacts with SLC9A7. In terms of tissue distribution, widely expressed, with highest expression in brain.

It is found in the golgi apparatus. Its subcellular location is the trans-Golgi network membrane. The protein localises to the recycling endosome membrane. Functions in post-Golgi recycling pathways. Acts as a recycling carrier to the cell surface. This Homo sapiens (Human) protein is Secretory carrier-associated membrane protein 1 (SCAMP1).